Reading from the N-terminus, the 680-residue chain is DNA-directed RNA polymerase subunit beta' (680 aa).

Zn(2+) contacts are provided by Cys-69, Cys-71, Cys-87, and Cys-90. Asp-489, Asp-491, and Asp-493 together coordinate Mg(2+).

The protein belongs to the RNA polymerase beta' chain family. RpoC1 subfamily. In terms of assembly, in plastids the minimal PEP RNA polymerase catalytic core is composed of four subunits: alpha, beta, beta', and beta''. When a (nuclear-encoded) sigma factor is associated with the core the holoenzyme is formed, which can initiate transcription. Mg(2+) serves as cofactor. Zn(2+) is required as a cofactor.

The protein resides in the plastid. Its subcellular location is the chloroplast. It carries out the reaction RNA(n) + a ribonucleoside 5'-triphosphate = RNA(n+1) + diphosphate. Its function is as follows. DNA-dependent RNA polymerase catalyzes the transcription of DNA into RNA using the four ribonucleoside triphosphates as substrates. This Draba nemorosa (Woodland whitlowgrass) protein is DNA-directed RNA polymerase subunit beta'.